A 59-amino-acid polypeptide reads, in one-letter code: Large ribosomal subunit protein uL30 (59 aa).

It belongs to the universal ribosomal protein uL30 family. In terms of assembly, part of the 50S ribosomal subunit.

This is Large ribosomal subunit protein uL30 from Histophilus somni (strain 129Pt) (Haemophilus somnus).